The sequence spans 344 residues: Dihydroorotase (344 aa).

Positions 13 and 15 each coordinate Zn(2+). Residues 15-17 (HFR) and Asn-41 each bind substrate. Zn(2+) contacts are provided by Lys-98, His-135, and His-173. Lys-98 carries the post-translational modification N6-carboxylysine. Position 135 (His-135) interacts with substrate. Leu-218 is a binding site for substrate. Asp-246 provides a ligand contact to Zn(2+). Residue Asp-246 is part of the active site. Substrate contacts are provided by His-250 and Ala-262.

This sequence belongs to the metallo-dependent hydrolases superfamily. DHOase family. Class II DHOase subfamily. In terms of assembly, homodimer. Zn(2+) is required as a cofactor.

It catalyses the reaction (S)-dihydroorotate + H2O = N-carbamoyl-L-aspartate + H(+). Its pathway is pyrimidine metabolism; UMP biosynthesis via de novo pathway; (S)-dihydroorotate from bicarbonate: step 3/3. Catalyzes the reversible cyclization of carbamoyl aspartate to dihydroorotate. This Shewanella woodyi (strain ATCC 51908 / MS32) protein is Dihydroorotase.